Here is a 1035-residue protein sequence, read N- to C-terminus: Condensin complex subunit 3 (1035 aa).

2 HEAT repeats span residues 113–150 (RFVDQFIRHVLRGVESPDKNVRFRVLQLLAVIMDNIGE) and 153–191 (ESLFNLLILSLNKRIYDREPTVRIQAVFCLTKFQDEEQT). Serine 198 carries the post-translational modification Phosphoserine. One copy of the HEAT 3 repeat lies at 201 to 239 (EENFEATRTLVASIQNDPSAEVRRAAMLNLINDNNTRPY). Residues 500–536 (EEKIKSKKINRRNETSVDEEDENGTHNDEVNEDEEDD) are disordered. 2 HEAT repeats span residues 597–635 (ILIASLMDTLITPAVRNTAPNIRELGVKNLGLCCLLDVK) and 827–864 (VQLTFLIDVLKIYAQIEKKEIKKMIITNINAIFLSSEQ). The segment covering 909 to 919 (ERSETQTKDEN) has biased composition (basic and acidic residues). Disordered regions lie at residues 909 to 934 (ERSETQTKDENNTANDQYSSILGNSF) and 959 to 995 (TTVNISAVDNTTEQSNSRKRTRSEAEQIDTSKNLENM). 2 stretches are compositionally biased toward polar residues: residues 920-934 (NTANDQYSSILGNSF) and 959-973 (TTVNISAVDNTTEQS). Serine 933 carries the post-translational modification Phosphoserine. Serine 981 bears the Phosphoserine mark. A compositionally biased stretch (polar residues) spans 986–995 (IDTSKNLENM). Serine 1008 is subject to Phosphoserine. The disordered stretch occupies residues 1012 to 1035 (PDEKSDAMSIDEEDKDSESFSEVC).

It belongs to the CND3 (condensin subunit 3) family. As to quaternary structure, component of the condensin complex, which contains the SMC2 and SMC4 heterodimer, and three non SMC subunits that probably regulate the complex: BRN1, YCS4 and YCG1/YCS5.

The protein resides in the nucleus. Its subcellular location is the cytoplasm. It localises to the chromosome. Regulatory subunit of the condensin complex, a complex required for conversion of interphase chromatin into mitotic-like condense chromosomes. The condensin complex probably introduces positive supercoils into relaxed DNA in the presence of type I topoisomerases and converts nicked DNA into positive knotted forms in the presence of type II topoisomerases. The condensin complex probably also plays a role during interphase. The polypeptide is Condensin complex subunit 3 (YCG1) (Saccharomyces cerevisiae (strain ATCC 204508 / S288c) (Baker's yeast)).